The following is an 845-amino-acid chain: Receptor-like protein Cf-9 homolog (845 aa).

The signal sequence occupies residues 1-19; it reads MGCVKLVFFMLLKLDLLEF. The segment at 20 to 70 is N-cap; the sequence is KNMFTVNPNASDYCYDYTDQRMQSYPRTLFWNKSTDCCSWDGIHCDETTGQ. Topologically, residues 20–794 are extracellular; that stretch reads KNMFTVNPNA…EEDSPMISWQ (775 aa). Asn-28, Asn-51, and Asn-88 each carry an N-linked (GlcNAc...) asparagine glycan. The LRR 1; degenerate repeat unit spans residues 71–94; sequence VVELDLRCSQLQGKFHSNSSLFQL. 25 LRR repeats span residues 95–118, 119–143, 144–171, 172–193, 194–217, 219–242, 244–266, 267–291, 292–316, 318–338, 340–364, 365–388, 390–410, 411–434, 436–458, 459–482, 484–506, 507–531, 532–554, 555–579, 581–605, 649–672, 673–696, 698–721, and 723–741; these read SNLK…KFGE, FSDL…ISHL, SKLH…LKNL, TQLR…SNFS, SHLT…VFHL, DLEF…KWNS, ASLM…SFSH, LTSL…LWNL, TNIE…RFEK, KRLS…SFNR, WTQL…VSGL, QNLG…IFSL, SLVV…EFKS, KTLS…LLNQ, SLQF…ICNL, KTLM…VGER, EYLL…TFSI, GNSF…LINC, KYLK…WLGY, LSQL…GSTN, FMRL…ILGN, LDSN…IIGD, LVGL…SFQN, SVLE…LASL, and FLEV…IPKG. Residues Asn-131, Asn-170, Asn-183, and Asn-191 are each glycosylated (N-linked (GlcNAc...) asparagine). Residue Asn-241 is glycosylated (N-linked (GlcNAc...) asparagine). N-linked (GlcNAc...) asparagine glycans are attached at residues Asn-279 and Asn-290. Asn-337, Asn-360, Asn-378, and Asn-398 each carry an N-linked (GlcNAc...) asparagine glycan. N-linked (GlcNAc...) asparagine glycosylation is present at Asn-446. An N-linked (GlcNAc...) asparagine glycan is attached at Asn-501. An N-linked (GlcNAc...) asparagine glycan is attached at Asn-545. Residues Asn-656, Asn-680, and Asn-696 are each glycosylated (N-linked (GlcNAc...) asparagine). N-linked (GlcNAc...) asparagine glycosylation is found at Asn-728 and Asn-749. A C-cap/acidic domain region spans residues 742-794; sequence KQFDSFGNTSYQGNDGLRGFPLSKLCGVDDQVTTPAELDQEEEEEDSPMISWQ. The helical transmembrane segment at 795-815 threads the bilayer; it reads GVLVGYGCGLVIGLSVIYIMW. Residues 816 to 845 are Cytoplasmic-facing; that stretch reads STQYPAWFSRMDLKLEHIITTRMKKHKKRY.

It belongs to the RLP family.

The protein localises to the cell membrane. In terms of biological role, at the opposite of its homolog Cf-9 found in S.pimpinellifolium, was not able to confer resistance to the fungal pathogen C.fulvum. The polypeptide is Receptor-like protein Cf-9 homolog (Solanum lycopersicum (Tomato)).